A 208-amino-acid polypeptide reads, in one-letter code: Protein GrpE (208 aa).

Basic and acidic residues predominate over residues 1 to 12 (MTNKDESVEKNT). The tract at residues 1-59 (MTNKDESVEKNTESTVEETNIKQNIDDSVEQAEESKGHLQDEAIEETSDENVIEEIDPK) is disordered. Residues 13–23 (ESTVEETNIKQ) are compositionally biased toward polar residues. Positions 42–55 (EAIEETSDENVIEE) are enriched in acidic residues.

The protein belongs to the GrpE family. As to quaternary structure, homodimer.

It is found in the cytoplasm. Its function is as follows. Participates actively in the response to hyperosmotic and heat shock by preventing the aggregation of stress-denatured proteins, in association with DnaK and GrpE. It is the nucleotide exchange factor for DnaK and may function as a thermosensor. Unfolded proteins bind initially to DnaJ; upon interaction with the DnaJ-bound protein, DnaK hydrolyzes its bound ATP, resulting in the formation of a stable complex. GrpE releases ADP from DnaK; ATP binding to DnaK triggers the release of the substrate protein, thus completing the reaction cycle. Several rounds of ATP-dependent interactions between DnaJ, DnaK and GrpE are required for fully efficient folding. This is Protein GrpE from Staphylococcus aureus (strain Mu3 / ATCC 700698).